The chain runs to 313 residues: Proline iminopeptidase (313 aa).

Residues 35-298 enclose the AB hydrolase-1 domain; it reads KPVVILHGGP…TPGAGHSAFE (264 aa). Ser110 functions as the Nucleophile in the catalytic mechanism. Asp266 is an active-site residue. His294 (proton donor) is an active-site residue.

It belongs to the peptidase S33 family.

The protein localises to the cytoplasm. It carries out the reaction Release of N-terminal proline from a peptide.. In terms of biological role, specifically catalyzes the removal of N-terminal proline residues from peptides. In Xylella fastidiosa (strain 9a5c), this protein is Proline iminopeptidase (pip).